Here is a 180-residue protein sequence, read N- to C-terminus: Crossover junction endodeoxyribonuclease RuvC (180 aa).

Active-site residues include Asp7, Glu66, and Asp138. Positions 7, 66, and 138 each coordinate Mg(2+).

The protein belongs to the RuvC family. Homodimer which binds Holliday junction (HJ) DNA. The HJ becomes 2-fold symmetrical on binding to RuvC with unstacked arms; it has a different conformation from HJ DNA in complex with RuvA. In the full resolvosome a probable DNA-RuvA(4)-RuvB(12)-RuvC(2) complex forms which resolves the HJ. It depends on Mg(2+) as a cofactor.

Its subcellular location is the cytoplasm. It catalyses the reaction Endonucleolytic cleavage at a junction such as a reciprocal single-stranded crossover between two homologous DNA duplexes (Holliday junction).. Functionally, the RuvA-RuvB-RuvC complex processes Holliday junction (HJ) DNA during genetic recombination and DNA repair. Endonuclease that resolves HJ intermediates. Cleaves cruciform DNA by making single-stranded nicks across the HJ at symmetrical positions within the homologous arms, yielding a 5'-phosphate and a 3'-hydroxyl group; requires a central core of homology in the junction. The consensus cleavage sequence is 5'-(A/T)TT(C/G)-3'. Cleavage occurs on the 3'-side of the TT dinucleotide at the point of strand exchange. HJ branch migration catalyzed by RuvA-RuvB allows RuvC to scan DNA until it finds its consensus sequence, where it cleaves and resolves the cruciform DNA. In Burkholderia pseudomallei (strain 1710b), this protein is Crossover junction endodeoxyribonuclease RuvC.